Here is a 91-residue protein sequence, read N- to C-terminus: DNA-directed RNA polymerase subunit omega (91 aa).

This sequence belongs to the RNA polymerase subunit omega family. The RNAP catalytic core consists of 2 alpha, 1 beta, 1 beta' and 1 omega subunit. When a sigma factor is associated with the core the holoenzyme is formed, which can initiate transcription. The rRNA transcription and antitermination complex (rrnTAC) consists of RNAP, NusA, NusB, NusE (rpsJ), NusG, SubB, ribosomal protein S4, DNA and precursor rRNA; S4 is more flexible than other subunits.

It carries out the reaction RNA(n) + a ribonucleoside 5'-triphosphate = RNA(n+1) + diphosphate. Promotes RNA polymerase (RNAP) assembly. Latches the N- and C-terminal regions of the beta' subunit thereby facilitating its interaction with the beta and alpha subunits. Functionally, part of the processive rRNA transcription and antitermination complex (rrnTAC). The complex forms an RNA-chaperone ring around the RNA exit tunnel of RNAP. It supports rapid transcription and antitermination of rRNA operons, cotranscriptional rRNA folding, and annealing of distal rRNA regions to allow correct ribosome biogenesis. This chain is DNA-directed RNA polymerase subunit omega (rpoZ), found in Escherichia coli (strain K12).